Here is a 303-residue protein sequence, read N- to C-terminus: UDP-3-O-acyl-N-acetylglucosamine deacetylase (303 aa).

Zn(2+) contacts are provided by H78, H237, and D241. Catalysis depends on H264, which acts as the Proton donor.

Belongs to the LpxC family. Zn(2+) is required as a cofactor.

The enzyme catalyses a UDP-3-O-[(3R)-3-hydroxyacyl]-N-acetyl-alpha-D-glucosamine + H2O = a UDP-3-O-[(3R)-3-hydroxyacyl]-alpha-D-glucosamine + acetate. Its pathway is glycolipid biosynthesis; lipid IV(A) biosynthesis; lipid IV(A) from (3R)-3-hydroxytetradecanoyl-[acyl-carrier-protein] and UDP-N-acetyl-alpha-D-glucosamine: step 2/6. Catalyzes the hydrolysis of UDP-3-O-myristoyl-N-acetylglucosamine to form UDP-3-O-myristoylglucosamine and acetate, the committed step in lipid A biosynthesis. This Pseudomonas paraeruginosa (strain DSM 24068 / PA7) (Pseudomonas aeruginosa (strain PA7)) protein is UDP-3-O-acyl-N-acetylglucosamine deacetylase.